The chain runs to 501 residues: Nuclear receptor subfamily 5 group A member 2 (501 aa).

Residues 43–114 (EELCPVCGDK…KCLSVGMKLE (72 aa)) constitute a DNA-binding region (nuclear receptor). Residues Cys46, Cys49, Cys63, Cys66, Cys82, Cys88, Cys98, and Cys101 each coordinate Zn(2+). 2 consecutive NR C4-type zinc fingers follow at residues 46 to 66 (CPVCGDKVSGYHYGLLTCESC) and 82 to 106 (CIENQNCQIDKTQRKRCPYCRFQKC). The segment at 112–127 (KLEAVRADRMRGGRNK) is C-terminal extension (CTE). Positions 128 to 147 (FGPMYKRDRALKQQKKALIR) match the FTZ-F1 box motif. The interval 186–207 (NHTALPPTDYDRSPFVTSPISM) is disordered. One can recognise an NR LBD domain in the interval 260-499 (SIPHLILELQ…NLLIEMLHAK (240 aa)). Residues 381 to 384 (GATL), Tyr476, and Lys480 each bind a phospholipid derivative. The interval 488-499 (CNNLLIEMLHAK) is AF-2.

This sequence belongs to the nuclear hormone receptor family. NR5 subfamily. As to quaternary structure, monomer; Binds DNA as a monomer. Detected in liver and adrenal gland.

Its subcellular location is the nucleus. It is found in the chromosome. In terms of biological role, orphan nuclear receptor that binds DNA as a monomer to the 5'-TCAAGGCCA-3' sequence and controls expression of target genes: regulates key biological processes, such as cholesterol and bile acid synthesis pathways, as well as cartilage, liver and pancreas morphogenesis. Ligand-binding causes conformational change which causes recruitment of coactivators, promoting target gene activation. The specific ligand is unknown, but specific phospholipids, such as phosphatidylethanolamine, phosphatidylserine, dilauroyl phosphatidylcholine and diundecanoyl phosphatidylcholine can act as ligand in vitro. Acts as a pioneer transcription factor, which unwraps target DNA from histones and elicits local opening of closed chromatin. Involved in the formation of connective tissue in lower jaw. The protein is Nuclear receptor subfamily 5 group A member 2 of Gallus gallus (Chicken).